A 121-amino-acid polypeptide reads, in one-letter code: Small ribosomal subunit protein bS6 (121 aa).

Belongs to the bacterial ribosomal protein bS6 family.

Functionally, binds together with bS18 to 16S ribosomal RNA. The protein is Small ribosomal subunit protein bS6 of Rickettsia conorii (strain ATCC VR-613 / Malish 7).